Reading from the N-terminus, the 176-residue chain is Dual specificity phosphatase 28 (176 aa).

Residues 17–159 (PPLVRVAPSL…LQKYEEALQA (143 aa)) form the Tyrosine-protein phosphatase domain. C103 acts as the Phosphocysteine intermediate in catalysis.

It belongs to the protein-tyrosine phosphatase family. Non-receptor class dual specificity subfamily. As to quaternary structure, monomer.

It carries out the reaction O-phospho-L-tyrosyl-[protein] + H2O = L-tyrosyl-[protein] + phosphate. The catalysed reaction is O-phospho-L-seryl-[protein] + H2O = L-seryl-[protein] + phosphate. It catalyses the reaction O-phospho-L-threonyl-[protein] + H2O = L-threonyl-[protein] + phosphate. Functionally, has phosphatase activity with the synthetic substrate 6,8-difluoro-4-methylumbelliferyl phosphate (in vitro). Has almost no detectable activity with phosphotyrosine, even less activity with phosphothreonine and displays complete lack of activity with phosphoserine. The poor activity with phosphotyrosine may be due to steric hindrance by bulky amino acid sidechains that obstruct access to the active site. The polypeptide is Dual specificity phosphatase 28 (DUSP28) (Homo sapiens (Human)).